The primary structure comprises 221 residues: Vacuolar protein sorting-associated protein 20 (221 aa).

Residue Gly2 is the site of N-myristoyl glycine attachment. The stretch at 72 to 178 forms a coiled coil; the sequence is QEHLLQQASD…LNPEKMNNAK (107 aa). Residues 170-221 are disordered; the sequence is NPEKMNNAKVANMPSTEGLPSLPQGEQTEQKEREEFATEERSDTKEPLALLS. Basic and acidic residues predominate over residues 197-215; the sequence is TEQKEREEFATEERSDTKE.

The protein belongs to the SNF7 family. In terms of assembly, core component of the ESCRT-III complex (endosomal sorting required for transport complex III). ESCRT-III appears to be sequentially assembled as a flat lattice on the endosome membrane and forms a transient 450 kDa complex that contains DID4, oligomerized SNF7, VPS20 and VPS24. SNF7 oligomerization into a membrane-associated filament is nucleated by association of SNF7 with VPS20; the process is terminated through association of VPS24, possibly by capping the SNF7 filament. VPS24 subsequently associates with DID4/VPS2. Interacts with the VPS4. Interacts with VPS25; the interaction mediates the association with the ESCRT-II complex.

It is found in the endosome membrane. The protein localises to the vacuole membrane. Class E VPS protein implicated in concentration and sorting of cargo proteins of the multivesicular body (MVB) for incorporation into intralumenal vesicles. The lumenal sequestrated membrane proteins will be targeted into the vacuole after fusion of the endosome with the vacuole. Acts a component of the ESCRT-III complex, which appears to be critical for late steps in MVB sorting, such as membrane invagination and final cargo sorting and recruitment of late-acting components of the sorting machinery. The MVB pathway requires the sequential function of ESCRT-O, -I,-II and -III complex assemblies. Required for the oligomerization of SNF7 into a membrane-associated filament. The VPS20-SNF7 subcomplex is responsible for the membrane association of the ESCRT-III complex. Also required for the RIM101 repressor proteolytic activation. The protein is Vacuolar protein sorting-associated protein 20 (VPS20) of Saccharomyces cerevisiae (strain ATCC 204508 / S288c) (Baker's yeast).